We begin with the raw amino-acid sequence, 99 residues long: Large ribosomal subunit protein uL23 (99 aa).

This sequence belongs to the universal ribosomal protein uL23 family. As to quaternary structure, part of the 50S ribosomal subunit. Contacts protein L29, and trigger factor when it is bound to the ribosome.

In terms of biological role, one of the early assembly proteins it binds 23S rRNA. One of the proteins that surrounds the polypeptide exit tunnel on the outside of the ribosome. Forms the main docking site for trigger factor binding to the ribosome. In Clavibacter michiganensis subsp. michiganensis (strain NCPPB 382), this protein is Large ribosomal subunit protein uL23.